Reading from the N-terminus, the 439-residue chain is Rho GTPase-activating protein 1 (439 aa).

N-acetylmethionine is present on Met1. Positions 28 to 48 (IDEKNWPSDEMPDFPKSDDSK) are enriched in basic and acidic residues. The disordered stretch occupies residues 28–52 (IDEKNWPSDEMPDFPKSDDSKSSSP). Residues Ser44, Ser47, Ser50, and Ser51 each carry the phosphoserine modification. Positions 63-218 (PYYDIARHQI…QVLKYDDFLK (156 aa)) constitute a CRAL-TRIO domain. Position 65 is a phosphotyrosine (Tyr65). Residue Lys80 is modified to N6-acetyllysine. An SH3-binding motif is present at residues 228 to 238 (PKPMPPRPPLP). The region spanning 244-431 (VSLQHLQEKN…FLLDHQGELF (188 aa)) is the Rho-GAP domain.

Found in a complex with XPO7, EIF4A1, ARHGAP1, VPS26A, VPS29, VPS35 and SFN. Interacts with BNIPL. As to expression, ubiquitous.

It is found in the cytoplasm. Its function is as follows. GTPase activator for the Rho, Rac and Cdc42 proteins, converting them to the putatively inactive GDP-bound state. Cdc42 seems to be the preferred substrate. The sequence is that of Rho GTPase-activating protein 1 (ARHGAP1) from Homo sapiens (Human).